The following is a 341-amino-acid chain: Methionine import ATP-binding protein MetN 1 (341 aa).

One can recognise an ABC transporter domain in the interval 2-241 (IEFRQVSKSF…PKTTIAQNFV (240 aa)). ATP is bound at residue 38–45 (GYSGAGKS).

It belongs to the ABC transporter superfamily. Methionine importer (TC 3.A.1.24) family. The complex is composed of two ATP-binding proteins (MetN), two transmembrane proteins (MetI) and a solute-binding protein (MetQ).

It localises to the cell membrane. The catalysed reaction is L-methionine(out) + ATP + H2O = L-methionine(in) + ADP + phosphate + H(+). It carries out the reaction D-methionine(out) + ATP + H2O = D-methionine(in) + ADP + phosphate + H(+). In terms of biological role, part of the ABC transporter complex MetNIQ involved in methionine import. Responsible for energy coupling to the transport system. This is Methionine import ATP-binding protein MetN 1 from Staphylococcus aureus (strain bovine RF122 / ET3-1).